The chain runs to 195 residues: Interferon omega-1 (195 aa).

The first 23 residues, 1-23 (MAFSVSSLMALVVISSSPVSSMS), serve as a signal peptide directing secretion. 2 disulfide bridges follow: Cys-24-Cys-122 and Cys-52-Cys-162. A glycan (N-linked (GlcNAc...) asparagine) is linked at Asn-101.

The protein belongs to the alpha/beta interferon family.

Its subcellular location is the secreted. This Equus caballus (Horse) protein is Interferon omega-1.